The following is a 419-amino-acid chain: Sulfate adenylyltransferase (419 aa).

It belongs to the sulfate adenylyltransferase family.

The catalysed reaction is sulfate + ATP + H(+) = adenosine 5'-phosphosulfate + diphosphate. Its pathway is sulfur metabolism; hydrogen sulfide biosynthesis; sulfite from sulfate: step 1/3. The chain is Sulfate adenylyltransferase from Psychrobacter sp. (strain PRwf-1).